The sequence spans 484 residues: Glycogen synthase (484 aa).

ADP-alpha-D-glucose is bound at residue Lys15.

This sequence belongs to the glycosyltransferase 1 family. Bacterial/plant glycogen synthase subfamily.

The catalysed reaction is [(1-&gt;4)-alpha-D-glucosyl](n) + ADP-alpha-D-glucose = [(1-&gt;4)-alpha-D-glucosyl](n+1) + ADP + H(+). It functions in the pathway glycan biosynthesis; glycogen biosynthesis. Functionally, synthesizes alpha-1,4-glucan chains using ADP-glucose. The chain is Glycogen synthase from Syntrophotalea carbinolica (strain DSM 2380 / NBRC 103641 / GraBd1) (Pelobacter carbinolicus).